We begin with the raw amino-acid sequence, 214 residues long: Thymidylate kinase (214 aa).

10-17 contributes to the ATP binding site; sequence GIDGCGKT.

This sequence belongs to the thymidylate kinase family.

It carries out the reaction dTMP + ATP = dTDP + ADP. Its function is as follows. Phosphorylation of dTMP to form dTDP in both de novo and salvage pathways of dTTP synthesis. In Prochlorococcus marinus subsp. pastoris (strain CCMP1986 / NIES-2087 / MED4), this protein is Thymidylate kinase.